Reading from the N-terminus, the 394-residue chain is Chorismate synthase (394 aa).

Arg-62 is an NADP(+) binding site. Residues 144 to 146, Gly-307, 322 to 326, and Arg-349 contribute to the FMN site; these read RAS and KPTPT.

Belongs to the chorismate synthase family. Homotetramer. The cofactor is FMNH2.

The catalysed reaction is 5-O-(1-carboxyvinyl)-3-phosphoshikimate = chorismate + phosphate. It functions in the pathway metabolic intermediate biosynthesis; chorismate biosynthesis; chorismate from D-erythrose 4-phosphate and phosphoenolpyruvate: step 7/7. In terms of biological role, catalyzes the anti-1,4-elimination of the C-3 phosphate and the C-6 proR hydrogen from 5-enolpyruvylshikimate-3-phosphate (EPSP) to yield chorismate, which is the branch point compound that serves as the starting substrate for the three terminal pathways of aromatic amino acid biosynthesis. This reaction introduces a second double bond into the aromatic ring system. The polypeptide is Chorismate synthase (Acetivibrio thermocellus (strain ATCC 27405 / DSM 1237 / JCM 9322 / NBRC 103400 / NCIMB 10682 / NRRL B-4536 / VPI 7372) (Clostridium thermocellum)).